Consider the following 394-residue polypeptide: DNA replication and repair protein RecF (394 aa).

30–37 (GPNAAGKT) is a binding site for ATP.

The protein belongs to the RecF family.

The protein localises to the cytoplasm. Its function is as follows. The RecF protein is involved in DNA metabolism; it is required for DNA replication and normal SOS inducibility. RecF binds preferentially to single-stranded, linear DNA. It also seems to bind ATP. The chain is DNA replication and repair protein RecF from Roseiflexus castenholzii (strain DSM 13941 / HLO8).